The following is a 289-amino-acid chain: Eukaryotic translation initiation factor 3 subunit G (289 aa).

Residues 1 to 33 are disordered; that stretch reads MSRPTKADWADDEEFDDPSALPPQQITTNKDGT. Positions 209-287 constitute an RRM domain; that stretch reads ATLRVTNVSE…LILRVEFAKR (79 aa).

The protein belongs to the eIF-3 subunit G family. In terms of assembly, component of the eukaryotic translation initiation factor 3 (eIF-3) complex.

The protein localises to the cytoplasm. Its function is as follows. RNA-binding component of the eukaryotic translation initiation factor 3 (eIF-3) complex, which is involved in protein synthesis of a specialized repertoire of mRNAs and, together with other initiation factors, stimulates binding of mRNA and methionyl-tRNAi to the 40S ribosome. The eIF-3 complex specifically targets and initiates translation of a subset of mRNAs involved in cell proliferation. This subunit can bind 18S rRNA. This chain is Eukaryotic translation initiation factor 3 subunit G (tif35), found in Emericella nidulans (strain FGSC A4 / ATCC 38163 / CBS 112.46 / NRRL 194 / M139) (Aspergillus nidulans).